The following is a 245-amino-acid chain: Probable membrane transporter protein YdhB (245 aa).

The next 8 membrane-spanning stretches (helical) occupy residues Met1–Gly21, His34–Ala56, Leu71–Ile91, Tyr98–Leu118, Ile137–Ile157, Met177–Val197, Tyr199–Phe219, and Lys225–Phe245.

Belongs to the 4-toluene sulfonate uptake permease (TSUP) (TC 2.A.102) family.

The protein resides in the cell membrane. The chain is Probable membrane transporter protein YdhB (ydhB) from Bacillus subtilis (strain 168).